Reading from the N-terminus, the 108-residue chain is Class I hydrophobin 3 (108 aa).

An N-terminal signal peptide occupies residues 1 to 17 (MFFQTTIVAALAFLAVA). Disulfide bonds link Cys28–Cys87, Cys35–Cys81, Cys36–Cys69, and Cys88–Cys101. Asn37 carries N-linked (GlcNAc...) asparagine glycosylation.

It belongs to the fungal hydrophobin family. As to quaternary structure, self-assembles to form functional amyloid fibrils called rodlets. Self-assembly into fibrillar rodlets occurs spontaneously at hydrophobic:hydrophilic interfaces and the rodlets further associate laterally to form amphipathic monolayers.

The protein localises to the secreted. It localises to the cell wall. In terms of biological role, aerial growth, conidiation, and dispersal of filamentous fungi in the environment rely upon a capability of their secreting small amphipathic proteins called hydrophobins (HPBs) with low sequence identity. Class I can self-assemble into an outermost layer of rodlet bundles on aerial cell surfaces, conferring cellular hydrophobicity that supports fungal growth, development and dispersal; whereas Class II form highly ordered films at water-air interfaces through intermolecular interactions but contribute nothing to the rodlet structure. Vmh3 is a class I hydrophobin that is essential for the maintenance of the surface hydrophobicity of the mycelium and might be involved in the development of fruiting bodies. Plays an important role in hyphal resistance against environmental stress. Necessary for the efficient biodegradation of lignin. This is Class I hydrophobin 3 from Pleurotus ostreatus (Oyster mushroom).